A 114-amino-acid polypeptide reads, in one-letter code: Phosphorelay protein LuxU (114 aa).

The HPt domain occupies Gly19–Asn114. Residue His58 is modified to Phosphohistidine.

Monomer.

Phosphorelay protein which receives sensory signals from LuxN and LuxP and transmits them to LuxO, at low cell density. LuxN and LuxP transfer a phosphoryl group to LuxU on His-58 and this phosphoryl group is further transferred to LuxO. At high cell density, as LuxU could function to establish an equilibrium between the aspartyl-phosphate of LuxN and the aspartyl-phosphate of LuxO, LuxU transfers phosphate from LuxO to LuxN (and probably LuxP) and finally phosphate is drained from the system. In Vibrio harveyi (Beneckea harveyi), this protein is Phosphorelay protein LuxU (luxU).